The chain runs to 330 residues: UDP-glucose 4-epimerase (330 aa).

Residues 11–12 (YI), 31–36 (DALYTG), 51–52 (DI), 73–77 (FAAYS), asparagine 92, serine 117, tyrosine 141, lysine 145, and phenylalanine 169 each bind NAD(+). Residues serine 117 and tyrosine 141 each contribute to the substrate site. The Proton acceptor role is filled by tyrosine 141. Residues asparagine 170, 189-190 (HL), 206-208 (TIF), arginine 221, and 282-285 (RGGD) each bind substrate.

The protein belongs to the NAD(P)-dependent epimerase/dehydratase family. As to quaternary structure, homodimer. NAD(+) is required as a cofactor.

The catalysed reaction is UDP-alpha-D-glucose = UDP-alpha-D-galactose. It participates in carbohydrate metabolism; galactose metabolism. Functionally, involved in the metabolism of galactose. Catalyzes the conversion of UDP-galactose (UDP-Gal) to UDP-glucose (UDP-Glc) through a mechanism involving the transient reduction of NAD. It also could be involved in preparation of carbohydrate residues for incorporation into complex polymers, such as exopolysaccharides. This chain is UDP-glucose 4-epimerase (galE), found in Lactobacillus helveticus (Lactobacillus suntoryeus).